Consider the following 190-residue polypeptide: Elongation factor P (190 aa).

This sequence belongs to the elongation factor P family.

The protein resides in the cytoplasm. Its pathway is protein biosynthesis; polypeptide chain elongation. Involved in peptide bond synthesis. Stimulates efficient translation and peptide-bond synthesis on native or reconstituted 70S ribosomes in vitro. Probably functions indirectly by altering the affinity of the ribosome for aminoacyl-tRNA, thus increasing their reactivity as acceptors for peptidyl transferase. This chain is Elongation factor P, found in Pseudomonas fluorescens (strain SBW25).